The chain runs to 625 residues: Probable potassium transport system protein Kup 2 (625 aa).

Helical transmembrane passes span 10–30, 47–67, 104–124, 140–160, 172–192, 214–234, 250–270, 283–303, 347–367, 369–389, 396–416, and 422–442; these read LAAL…TSPL, GVHL…VVTL, VLLL…VITP, PAFK…LFAV, FGPV…AEII, GWHM…VEAL, WLGL…ALLM, LFPQ…TVIA, WLLL…SALA, AYGI…FFVV, PLPV…LLVV, and FFQG…VMAT.

This sequence belongs to the HAK/KUP transporter (TC 2.A.72) family.

It is found in the cell inner membrane. The enzyme catalyses K(+)(in) + H(+)(in) = K(+)(out) + H(+)(out). Its function is as follows. Transport of potassium into the cell. Likely operates as a K(+):H(+) symporter. The sequence is that of Probable potassium transport system protein Kup 2 from Albidiferax ferrireducens (strain ATCC BAA-621 / DSM 15236 / T118) (Rhodoferax ferrireducens).